The following is an 86-amino-acid chain: Large ribosomal subunit protein bL27 (86 aa).

Residues 1–10 (MAQKKGGGST) are compositionally biased toward gly residues. Residues 1–21 (MAQKKGGGSTRNGRDSESKRL) form a disordered region.

Belongs to the bacterial ribosomal protein bL27 family.

The sequence is that of Large ribosomal subunit protein bL27 from Ralstonia nicotianae (strain ATCC BAA-1114 / GMI1000) (Ralstonia solanacearum).